The following is a 541-amino-acid chain: Tyrosine-protein kinase Yes (541 aa).

The segment covering 1–10 has biased composition (basic and acidic residues); the sequence is MGCIKSKENK. A disordered region spans residues 1–29; sequence MGCIKSKENKSPAIKYTPENPTEPVNTSA. G2 is lipidated: N-myristoyl glycine. Residue C3 is the site of S-palmitoyl cysteine; in membrane form attachment. The span at 19-29 shows a compositional bias: polar residues; sequence ENPTEPVNTSA. Phosphotyrosine is present on Y32. One can recognise an SH3 domain in the interval 89 to 150; it reads GGVTIFVALY…PSNYVAPADS (62 aa). The SH2 domain maps to 156–253; the sequence is WYFGKMGRKD…GLCHKLTTVC (98 aa). One can recognise a Protein kinase domain in the interval 275-528; the sequence is LRLEVKLGQG…YIQSFLEDYF (254 aa). Residues 281 to 289 and K303 contribute to the ATP site; that span reads LGQGCFGEV. Phosphotyrosine occurs at positions 334 and 343. D394 (proton acceptor) is an active-site residue. Phosphotyrosine; by autocatalysis is present on Y424. Residue Y535 is modified to Phosphotyrosine.

Interacts with YAP1 and CSF1R. Interacts with FASLG. Interacts with CTNND1; this interaction allows YES1-mediated activation of FYN and FER and subsequent phosphorylation of CTNND1. Interacts with IL6ST/gp130. Interacts with SCRIB, when YES1 is in a closed conformation; the interaction facilitates YES1 autophosphorylation. In terms of processing, phosphorylated. Phosphorylation by CSK on the C-terminal tail maintains the enzyme in an inactive state. Autophosphorylation at Tyr-424 maintains enzyme activity by blocking CSK-mediated inhibition. Post-translationally, palmitoylation at Cys-3 promotes membrane localization.

It localises to the cell membrane. Its subcellular location is the cytoplasm. It is found in the cytoskeleton. The protein localises to the microtubule organizing center. The protein resides in the centrosome. It localises to the cytosol. Its subcellular location is the cell junction. The enzyme catalyses L-tyrosyl-[protein] + ATP = O-phospho-L-tyrosyl-[protein] + ADP + H(+). In terms of biological role, non-receptor protein tyrosine kinase that is involved in the regulation of cell growth and survival, apoptosis, cell-cell adhesion, cytoskeleton remodeling, and differentiation. Stimulation by receptor tyrosine kinases (RTKs) including EGFR, PDGFR, CSF1R and FGFR leads to recruitment of YES1 to the phosphorylated receptor, and activation and phosphorylation of downstream substrates. Upon EGFR activation, promotes the phosphorylation of PARD3 to favor epithelial tight junction assembly. Participates in the phosphorylation of specific junctional components such as CTNND1 by stimulating the FYN and FER tyrosine kinases at cell-cell contacts. Upon T-cell stimulation by CXCL12, phosphorylates collapsin response mediator protein 2/DPYSL2 and induces T-cell migration. Participates in CD95L/FASLG signaling pathway and mediates AKT-mediated cell migration. Plays a role in cell cycle progression by phosphorylating the cyclin dependent kinase 4/CDK4 thus regulating the G1 phase. Also involved in G2/M progression and cytokinesis. Catalyzes phosphorylation of organic cation transporter OCT2 which induces its transport activity. This Rattus norvegicus (Rat) protein is Tyrosine-protein kinase Yes (Yes1).